A 255-amino-acid polypeptide reads, in one-letter code: Imidazole glycerol phosphate synthase subunit HisF (255 aa).

Catalysis depends on residues aspartate 11 and aspartate 130.

Belongs to the HisA/HisF family. As to quaternary structure, heterodimer of HisH and HisF.

It localises to the cytoplasm. The catalysed reaction is 5-[(5-phospho-1-deoxy-D-ribulos-1-ylimino)methylamino]-1-(5-phospho-beta-D-ribosyl)imidazole-4-carboxamide + L-glutamine = D-erythro-1-(imidazol-4-yl)glycerol 3-phosphate + 5-amino-1-(5-phospho-beta-D-ribosyl)imidazole-4-carboxamide + L-glutamate + H(+). It participates in amino-acid biosynthesis; L-histidine biosynthesis; L-histidine from 5-phospho-alpha-D-ribose 1-diphosphate: step 5/9. IGPS catalyzes the conversion of PRFAR and glutamine to IGP, AICAR and glutamate. The HisF subunit catalyzes the cyclization activity that produces IGP and AICAR from PRFAR using the ammonia provided by the HisH subunit. The sequence is that of Imidazole glycerol phosphate synthase subunit HisF from Synechococcus sp. (strain ATCC 27144 / PCC 6301 / SAUG 1402/1) (Anacystis nidulans).